Reading from the N-terminus, the 220-residue chain is Deoxyribose-phosphate aldolase (220 aa).

Asp-89 (proton donor/acceptor) is an active-site residue. Lys-151 (schiff-base intermediate with acetaldehyde) is an active-site residue. Catalysis depends on Lys-180, which acts as the Proton donor/acceptor.

It belongs to the DeoC/FbaB aldolase family. DeoC type 1 subfamily.

Its subcellular location is the cytoplasm. It catalyses the reaction 2-deoxy-D-ribose 5-phosphate = D-glyceraldehyde 3-phosphate + acetaldehyde. The protein operates within carbohydrate degradation; 2-deoxy-D-ribose 1-phosphate degradation; D-glyceraldehyde 3-phosphate and acetaldehyde from 2-deoxy-alpha-D-ribose 1-phosphate: step 2/2. Its function is as follows. Catalyzes a reversible aldol reaction between acetaldehyde and D-glyceraldehyde 3-phosphate to generate 2-deoxy-D-ribose 5-phosphate. This is Deoxyribose-phosphate aldolase from Staphylococcus epidermidis (strain ATCC 12228 / FDA PCI 1200).